Reading from the N-terminus, the 94-residue chain is Sulfocarbamoylase-1 (94 aa).

In terms of assembly, homodimer. Ubiquitous (at protein level). Highest levels of expression in crystalline style followed by digestive gland and mantle.

Strongly inhibited by the serine proteinase inhibitor AEBSF. Weakly inhibited by the proteinase inhibitors BSF and aprotinin, and by EDTA. Not inhibited by the proteinase inhibitors bestatin, E-64 and leupeptin. In terms of biological role, hydrolysis of sulfocarbamoyl esters of paralytic shellfish toxins. Does not hydrolyze the carbamoyl esters of paralytic shellfish toxins. Ester hydrolysis is significantly affected by the stereochemistry of sulfate esters at C-11 of the substrate toxin. This Megangulus venulosus (Japanese bivalve) protein is Sulfocarbamoylase-1.